A 394-amino-acid chain; its full sequence is LL-diaminopimelate aminotransferase (394 aa).

Residues Tyr-14 and Gly-41 each coordinate substrate. Residues Tyr-71, 104–105, Tyr-128, Asn-174, Tyr-205, and 233–235 each bind pyridoxal 5'-phosphate; these read AK and SFS. Substrate contacts are provided by Lys-105, Tyr-128, and Asn-174. At Lys-236 the chain carries N6-(pyridoxal phosphate)lysine. 2 residues coordinate pyridoxal 5'-phosphate: Arg-244 and Asn-275. Positions 275 and 369 each coordinate substrate.

This sequence belongs to the class-I pyridoxal-phosphate-dependent aminotransferase family. LL-diaminopimelate aminotransferase subfamily. Homodimer. The cofactor is pyridoxal 5'-phosphate.

The catalysed reaction is (2S,6S)-2,6-diaminopimelate + 2-oxoglutarate = (S)-2,3,4,5-tetrahydrodipicolinate + L-glutamate + H2O + H(+). The protein operates within amino-acid biosynthesis; L-lysine biosynthesis via DAP pathway; LL-2,6-diaminopimelate from (S)-tetrahydrodipicolinate (aminotransferase route): step 1/1. Functionally, involved in the synthesis of meso-diaminopimelate (m-DAP or DL-DAP), required for both lysine and peptidoglycan biosynthesis. Catalyzes the direct conversion of tetrahydrodipicolinate to LL-diaminopimelate. Is also able to use meso-diaminopimelate, cystathionine, lysine or ornithine as substrates. The polypeptide is LL-diaminopimelate aminotransferase (Chlamydia trachomatis serovar D (strain ATCC VR-885 / DSM 19411 / UW-3/Cx)).